Reading from the N-terminus, the 130-residue chain is Cholecystokinin (130 aa).

Positions methionine 1–glycine 20 are cleaved as a signal peptide. A propeptide spanning residues glutamine 21 to arginine 48 is cleaved from the precursor. The interval glutamine 21–aspartate 63 is disordered. Tyrosine 112 bears the Sulfotyrosine mark. Phenylalanine 118 is modified (phenylalanine amide). Positions serine 122–serine 130 are excised as a propeptide. Residues tyrosine 126 and tyrosine 128 each carry the sulfotyrosine modification.

It belongs to the gastrin/cholecystokinin family. The precursor is cleaved by proteases to produce a number of active cholecystokinins. In the small intestine, the major production site is around the vitelline diverticulum.

It localises to the secreted. This peptide hormone induces gall bladder contraction and the release of pancreatic enzymes in the gut. Its function in the brain is not clear. It also decreases food intake and regulates gastrointestinal physiological processes. In Gallus gallus (Chicken), this protein is Cholecystokinin (CCK).